The chain runs to 484 residues: Calcium uniporter protein, mitochondrial (484 aa).

The N-terminal 33 residues, 1–33, are a transit peptide targeting the mitochondrion; it reads MGHVLGGTLLAANRLARPPAVVLGKPRVCCWRA. The Mitochondrial matrix portion of the chain corresponds to 34 to 304; the sequence is SPWPVIVSSA…CDLLAHKGAH (271 aa). 2 disordered regions span residues 59-104 and 188-227; these read ARYE…KGRL and YTGG…DTHW. The span at 61–82 shows a compositional bias: basic and acidic residues; that stretch reads YEARGRSTTQRKVDDRPWHRES. Over residues 83–93 the composition is skewed to polar residues; the sequence is SGSLPKSTSPD. The helical transmembrane segment at 305–326 threads the bilayer; sequence ALAKGGFAALAAWWGIVYYVTF. Residues 327 to 334 lie on the Mitochondrial intermembrane side of the membrane; the sequence is HTDMGWDL. Positions 332-340 match the Selectivity filter motif; it reads WDLVEPITY. A helical transmembrane segment spans residues 335 to 355; that stretch reads VEPITYLAGLASIMGGYLWFL. Glu336 contacts Ca(2+). Over 356–484 the chain is Mitochondrial matrix; it reads FISRDLSYKA…NEAAANVPGD (129 aa). Basic and acidic residues-rich tracts occupy residues 426-435 and 452-462; these read KEVLEEEKGG and DHDHDHDHVSH. Residues 426 to 484 are disordered; sequence KEVLEEEKGGKARKREQEDEDGDGDDDHDHDHDHVSHGAELQGQDILHANEAAANVPGD.

Belongs to the MCU (TC 1.A.77) family. Homotetramer, assembles in a dimer or dimers configuration with two interfaces.

It localises to the mitochondrion inner membrane. It carries out the reaction Ca(2+)(in) = Ca(2+)(out). Its activity is regulated as follows. Inhibited by ruthenium red or its derivative Ru360. In terms of biological role, highly selective calcium channel localized to the inner mitochondrial membrane, which mediates calcium uptake into the mitochondrial matrix. Mitochondrial calcium homeostasis plays key roles in cellular physiology and regulates ATP production, cytoplasmic calcium signals and activation of cell death pathways. Sufficient to operate as a pore-forming channel without the need of calcium-sensor or auxiliary subunit. This Metarhizium acridum (strain CQMa 102) protein is Calcium uniporter protein, mitochondrial.